The sequence spans 571 residues: Septation ring formation regulator EzrA (571 aa).

Over 1–3 (MYY) the chain is Extracellular. The chain crosses the membrane as a helical span at residues 4-22 (MLIGFIIVVIAVIGAGYIL). At 23–571 (KRKHYQRINE…ESKVSVDDIE (549 aa)) the chain is on the cytoplasmic side. Coiled-coil stretches lie at residues 248 to 298 (LAQM…DTLE), 326 to 374 (DALA…ASGE), 400 to 437 (KFAEELRSLRKDELEARDDAERMRRAIITLDRKMERER), and 478 to 529 (RIAE…ENHF).

This sequence belongs to the EzrA family.

It localises to the cell membrane. Functionally, negative regulator of FtsZ ring formation; modulates the frequency and position of FtsZ ring formation. Inhibits FtsZ ring formation at polar sites. Interacts either with FtsZ or with one of its binding partners to promote depolymerization. The polypeptide is Septation ring formation regulator EzrA (Listeria monocytogenes serotype 4b (strain CLIP80459)).